The sequence spans 328 residues: 4-hydroxythreonine-4-phosphate dehydrogenase (328 aa).

Thr125 serves as a coordination point for substrate. Residues His160, His203, and His269 each contribute to the a divalent metal cation site. Lys277, Asn286, and Arg295 together coordinate substrate.

The protein belongs to the PdxA family. As to quaternary structure, homodimer. A divalent metal cation is required as a cofactor.

The protein localises to the cytoplasm. The catalysed reaction is 4-(phosphooxy)-L-threonine + NAD(+) = 3-amino-2-oxopropyl phosphate + CO2 + NADH. It functions in the pathway cofactor biosynthesis; pyridoxine 5'-phosphate biosynthesis; pyridoxine 5'-phosphate from D-erythrose 4-phosphate: step 4/5. Catalyzes the NAD(P)-dependent oxidation of 4-(phosphooxy)-L-threonine (HTP) into 2-amino-3-oxo-4-(phosphooxy)butyric acid which spontaneously decarboxylates to form 3-amino-2-oxopropyl phosphate (AHAP). The polypeptide is 4-hydroxythreonine-4-phosphate dehydrogenase (Synechococcus sp. (strain RCC307)).